A 219-amino-acid polypeptide reads, in one-letter code: Putative protease Do-like 6, chloroplastic (219 aa).

A chloroplast-targeting transit peptide spans 1–45 (MLFRSVHHIVARFSNSTSTPIHRFFYSPSLLRRRSSFNASLISRC). Residues 61–216 (KIFSFSREPN…YSGQINKKIY (156 aa)) form a serine protease region. Residues H99, D130, and S208 each act as charge relay system in the active site.

It belongs to the peptidase S1B family.

It is found in the plastid. Its subcellular location is the chloroplast. Putative serine protease. In Arabidopsis thaliana (Mouse-ear cress), this protein is Putative protease Do-like 6, chloroplastic (DEGP6).